A 430-amino-acid polypeptide reads, in one-letter code: Glutamate-1-semialdehyde 2,1-aminomutase (430 aa).

Position 265 is an N6-(pyridoxal phosphate)lysine (lysine 265).

The protein belongs to the class-III pyridoxal-phosphate-dependent aminotransferase family. HemL subfamily. As to quaternary structure, homodimer. Pyridoxal 5'-phosphate serves as cofactor.

It localises to the cytoplasm. It catalyses the reaction (S)-4-amino-5-oxopentanoate = 5-aminolevulinate. Its pathway is porphyrin-containing compound metabolism; protoporphyrin-IX biosynthesis; 5-aminolevulinate from L-glutamyl-tRNA(Glu): step 2/2. The polypeptide is Glutamate-1-semialdehyde 2,1-aminomutase (Shewanella sp. (strain ANA-3)).